A 433-amino-acid polypeptide reads, in one-letter code: Malate synthase (433 aa).

16–17 provides a ligand contact to acetyl-CoA; it reads TS. Residue aspartate 52 participates in Mg(2+) binding. Acetyl-CoA is bound at residue arginine 84. Glyoxylate is bound by residues arginine 84, glutamate 158, and 191–192; that span reads VD. The Mg(2+) site is built by glutamate 158 and aspartate 192. Positions 236 and 259 each coordinate acetyl-CoA. Aspartate 388 functions as the Proton acceptor in the catalytic mechanism.

It belongs to the HpcH/HpaI aldolase family. In terms of assembly, homotrimer and homohexamer in equilibrium. The cofactor is Mg(2+).

It localises to the cytoplasm. The enzyme catalyses glyoxylate + acetyl-CoA + H2O = (S)-malate + CoA + H(+). It participates in carbohydrate metabolism; glyoxylate cycle; (S)-malate from isocitrate: step 2/2. Functionally, involved in the glyoxylate cycle which synthesizes precursors for carbohydrates from C2 compounds such as acetate. Catalyzes the Claisen condensation between acetyl-coenzyme A (acetyl-CoA) and glyoxylate to form the malyl-CoA intermediate that is subsequently hydrolyzed to produce malate and CoA. The protein is Malate synthase (aceB) of Haloferax volcanii (strain ATCC 29605 / DSM 3757 / JCM 8879 / NBRC 14742 / NCIMB 2012 / VKM B-1768 / DS2) (Halobacterium volcanii).